A 403-amino-acid polypeptide reads, in one-letter code: Glycerophosphocholine acyltransferase 1 (403 aa).

Topologically, residues 1–112 are cytoplasmic; that stretch reads MDHLEFDENT…SGKVVRFRDK (112 aa). A helical transmembrane segment spans residues 113–133; it reads LSFALGVSTCILTALLVGMAP. Residues 134–137 lie on the Lumenal side of the membrane; the sequence is ESMH. Residues 138–155 form a helical membrane-spanning segment; that stretch reads LWYTIQLFVYLPLRYYTY. Topologically, residues 156 to 161 are cytoplasmic; the sequence is QRKGYE. The chain crosses the membrane as a helical span at residues 162 to 182; it reads YFIADFCYWGNILLLVYIWIF. At 183–186 the chain is on the lumenal side; the sequence is PESR. Residues 187–207 form a helical membrane-spanning segment; that stretch reads RLFILSYSISYGTLAWSVVAW. Residues 208 to 218 are Cytoplasmic-facing; that stretch reads RNSLLFHSIDK. Residues 219 to 239 traverse the membrane as a helical segment; that stretch reads ITSLFIHFFPPLVLHTIVHLT. An N-linked (GlcNAc...) asparagine glycan is attached at asparagine 240. The Lumenal segment spans residues 240-262; the sequence is NKSYLKDRFPAVLKVKKIDLLSS. The chain crosses the membrane as a helical span at residues 263–283; that stretch reads VEIASFFYALWQIWYYFFIQV. Over 284–322 the chain is Cytoplasmic; it reads GKQKQIQEGRPTSFTWLSKAYSKTKLGRAVAKLPQNLQP. Residues 323 to 343 traverse the membrane as a helical segment; that stretch reads FVFMIIQYLYSITTMLPCSLW. Over 344–352 the chain is Lumenal; that stretch reads YNNKLYSTA. A helical transmembrane segment spans residues 353-373; sequence FLALIFGWSVWNGASYYIDVF. Topologically, residues 374 to 403 are cytoplasmic; the sequence is GRRFQKELEALRQQLAETPTNSGSSSALSR.

This sequence belongs to the GPC1 family.

Its subcellular location is the endoplasmic reticulum membrane. The protein localises to the golgi apparatus membrane. It carries out the reaction sn-glycerol 3-phosphocholine + an acyl-CoA = a 1-acyl-sn-glycero-3-phosphocholine + CoA. The enzyme catalyses sn-glycero-3-phosphoethanolamine + an acyl-CoA = a monoacyl-sn-glycero-3-phosphoethanolamine + CoA. The catalysed reaction is sn-glycero-3-phosphoethanolamine + (9Z)-octadecenoyl-CoA = (9Z-octadecenoyl)-sn-glycero-3-phosphoethanolamine + CoA. Functionally, glycerophosphocholine acyltransferase (GPCAT) that utilizes acyl-CoA to acylate glycero-3-phosphocholine (GPC), forming lysophosphatidylcholine (LPC). Shows broad acyl specificities with a preference for 16:0-CoA, polyunsaturated acyl-CoA, and the hydroxylated ricinoleoyl-CoA. Also catalyzes the acylation of glycero-3-phosphoethanolamine (GPE) with acyl-CoA. In addition to acyl-CoA, GPCAT efficiently utilizes LPC and lysophosphatidylethanolamine (LPE) as acyl donors in the acylation of GPC. Contributes to the maintenance of phosphatidylcholine (PC) homeostasis and might also have specific functions in acyl editing of PC, such as transferring acyl groups modified at the sn-2 position of PC to the sn-1. This is Glycerophosphocholine acyltransferase 1 from Schizosaccharomyces pombe (strain 972 / ATCC 24843) (Fission yeast).